The chain runs to 468 residues: Aspartate ammonia-lyase (468 aa).

L-aspartate contacts are provided by threonine 101, serine 140, threonine 141, asparagine 142, threonine 187, and histidine 188. Residues 317-326 (GSSIMPGKVN) are SS loop. Serine 318 functions as the Proton acceptor in the catalytic mechanism. Residues serine 319 and lysine 324 each contribute to the L-aspartate site.

Belongs to the class-II fumarase/aspartase family. Aspartase subfamily. Homotetramer.

It catalyses the reaction L-aspartate = fumarate + NH4(+). With respect to regulation, unlike E.coli aspartase, the enzyme is not activated by the presence of divalent metal ions at alkaline pH. Functionally, catalyzes the reversible conversion of L-aspartate to fumarate and ammonia. Is highly specific for L-aspartate in the deamination reaction, and cannot use alternative substrates such as D-aspartic acid, alpha-methyl-DL-aspartic acid, beta-methyl-DL-aspartic acid or L-glutamate. In the reverse reaction, alternative nucleophiles (such as hydroxylamine, hydrazine, methoxylamine and methylamine) can replace ammonia in vitro, leading to the formation of N-substituted aspartic acid derivatives. The sequence is that of Aspartate ammonia-lyase from Bacillus sp.